Consider the following 296-residue polypeptide: MKDKLVKAIAKDGQVRIIGAITTELVNEGVRLHNCAPTAAAALGRMLTAGALMGTTLKSEKDTLTLQIHGGGIAKGVVITSYADGHVKGYIGNPTADIEPNSKGKLDVSGIIGKNGNLLVIRDMGLKEPYIGQVPIYTGEIGEDLAYYYTVSEQTPSAVGLGVLVDKDLSIKSAGGFIIQMMPGADEMLADLISYRLEEIPSITEMISKGMTIEEILEYIFEDMDLKILESIVPEYRCDCSREKVERALASIGQKDLKEIYDEGKEEELKCHFCNKAYVFSHDEVGDILENYYSEK.

Cystine bridges form between cysteine 238/cysteine 240 and cysteine 271/cysteine 274.

Belongs to the HSP33 family. Under oxidizing conditions two disulfide bonds are formed involving the reactive cysteines. Under reducing conditions zinc is bound to the reactive cysteines and the protein is inactive.

The protein localises to the cytoplasm. Its function is as follows. Redox regulated molecular chaperone. Protects both thermally unfolding and oxidatively damaged proteins from irreversible aggregation. Plays an important role in the bacterial defense system toward oxidative stress. This Clostridium botulinum (strain ATCC 19397 / Type A) protein is 33 kDa chaperonin.